Reading from the N-terminus, the 239-residue chain is Proteasome subunit beta type-6 (239 aa).

An N-acetylalanine modification is found at A2. Positions 2 to 34 (AATLLAARGAGPAPAWGPEAFTPDWESREVSTG) are cleaved as a propeptide — removed in mature form. T35 (nucleophile) is an active-site residue. Position 69 is a phosphothreonine (T69).

This sequence belongs to the peptidase T1B family. As to quaternary structure, the 26S proteasome consists of a 20S proteasome core and two 19S regulatory subunits. The 20S proteasome core is a barrel-shaped complex made of 28 subunits that are arranged in four stacked rings. The two outer rings are each formed by seven alpha subunits, and the two inner rings are formed by seven beta subunits. The proteolytic activity is exerted by three beta-subunits PSMB5, PSMB6 and PSMB7. (Microbial infection) Interacts with HIV-1 protein Tat.

Its subcellular location is the cytoplasm. The protein resides in the nucleus. The enzyme catalyses Cleavage of peptide bonds with very broad specificity.. In terms of biological role, component of the 20S core proteasome complex involved in the proteolytic degradation of most intracellular proteins. This complex plays numerous essential roles within the cell by associating with different regulatory particles. Associated with two 19S regulatory particles, forms the 26S proteasome and thus participates in the ATP-dependent degradation of ubiquitinated proteins. The 26S proteasome plays a key role in the maintenance of protein homeostasis by removing misfolded or damaged proteins that could impair cellular functions, and by removing proteins whose functions are no longer required. Associated with the PA200 or PA28, the 20S proteasome mediates ubiquitin-independent protein degradation. This type of proteolysis is required in several pathways including spermatogenesis (20S-PA200 complex) or generation of a subset of MHC class I-presented antigenic peptides (20S-PA28 complex). Within the 20S core complex, PSMB6 displays a peptidylglutamyl-hydrolizing activity also termed postacidic or caspase-like activity, meaning that the peptides bond hydrolysis occurs directly after acidic residues. The sequence is that of Proteasome subunit beta type-6 from Homo sapiens (Human).